Consider the following 109-residue polypeptide: Putative polyketide cyclase (109 aa).

The protein to polyketide cyclases.

In terms of biological role, involved in developmentally regulated synthesis of a compound biosynthetically related to polyketide antibiotics which is essential for spore color in Streptomyces halstedii. This chain is Putative polyketide cyclase (sch4), found in Streptomyces halstedii.